A 588-amino-acid polypeptide reads, in one-letter code: Phomenoic acid biosynthesis cluster cytochrome P450 monooxygenase (588 aa).

The first 21 residues, 1–21 (MSFARIFITILLLFILRRAFK), serve as a signal peptide directing secretion. Asparagine 293 carries an N-linked (GlcNAc...) asparagine glycan. The span at 467–486 (HQSDPDRFKPSPDAPDEKLF) shows a compositional bias: basic and acidic residues. Positions 467 to 490 (HQSDPDRFKPSPDAPDEKLFRPSR) are disordered. Cysteine 519 is a heme binding site.

It belongs to the cytochrome P450 family. Requires heme as cofactor.

The protein operates within secondary metabolite biosynthesis. Functionally, cytochrome P450 monooxygenase; part of the gene cluster that mediates the biosynthesis of phomenoic acid, a long chain aliphatic carboxylic acid that does not appear to be essential for pathogenicity but may play a role in allowing to outcompete other fungi in the environmental niche via its antifungal properties. The polyketide synthase produces the long methylated aliphatic carboxylic acid chain of phomenoic acid. The cluster-specific cytochrome P450 monooxygenase may then hydroxylate the methyl group of carbon 31. The putative dehydrogenase YogA, which has no obvious role in phomenoic acid biosynthesis, may further modify phomenoic acid to produce a compound not identified yet. The sequence is that of Phomenoic acid biosynthesis cluster cytochrome P450 monooxygenase from Leptosphaeria maculans (strain JN3 / isolate v23.1.3 / race Av1-4-5-6-7-8) (Blackleg fungus).